We begin with the raw amino-acid sequence, 377 residues long: DNA methyltransferase CcrM (377 aa).

Residues 271-373 (LGKAELTVMT…LRKIIREQMA (103 aa)) enclose the RAMA domain.

The protein belongs to the N(4)/N(6)-methyltransferase family.

It catalyses the reaction a 2'-deoxyadenosine in DNA + S-adenosyl-L-methionine = an N(6)-methyl-2'-deoxyadenosine in DNA + S-adenosyl-L-homocysteine + H(+). A beta subtype methylase that recognizes the double-stranded sequence 5'-GANTC-3' and methylates on A-2 on both strands. Overexpression from a moderate-copy number plasmid (10-12 copies/cell) leads to enlarged, branched cells, many with 3-5 genome equivalents. Contributes to the accurate cell-cycle control of DNA replication and cellular morphology. In Brucella abortus (strain 2308), this protein is DNA methyltransferase CcrM.